The sequence spans 1024 residues: Beta-galactosidase (1024 aa).

Positions 103 and 202 each coordinate substrate. D202 provides a ligand contact to Na(+). E417, H419, and E462 together coordinate Mg(2+). Substrate-binding positions include E462 and 538–541; that span reads EYAH. E462 acts as the Proton donor in catalysis. E538 (nucleophile) is an active-site residue. Residue N598 participates in Mg(2+) binding. Residues F602 and N605 each contribute to the Na(+) site. Residues N605 and W1000 each coordinate substrate.

It belongs to the glycosyl hydrolase 2 family. In terms of assembly, homotetramer. Requires Mg(2+) as cofactor. Na(+) is required as a cofactor.

It carries out the reaction Hydrolysis of terminal non-reducing beta-D-galactose residues in beta-D-galactosides.. This chain is Beta-galactosidase, found in Escherichia coli O1:K1 / APEC.